The sequence spans 124 residues: UPF0102 protein HCH_05895 (124 aa).

Belongs to the UPF0102 family.

The chain is UPF0102 protein HCH_05895 from Hahella chejuensis (strain KCTC 2396).